Here is a 289-residue protein sequence, read N- to C-terminus: Survival motor neuron protein (289 aa).

Gly residues predominate over residues 1–10; that stretch reads MAMGSGGGAG. The tract at residues 1–27 is disordered; it reads MAMGSGGGAGSEQEDTVLFRRGTGQSD. A P1 (binding site for GEMIN2) region spans residues 11 to 42; that stretch reads SEQEDTVLFRRGTGQSDDSDIWDDTALIKAYD. Threonine 23 carries the phosphothreonine modification. 2 positions are modified to phosphoserine: serine 26 and serine 29. Residue lysine 49 forms a Glycyl lysine isopeptide (Lys-Gly) (interchain with G-Cter in SUMO2) linkage. The interval 55-88 is disordered; that stretch reads GDMCETSDKPKGTARRKPAKKNKNQKKNATAPLK. Residues 66–80 are compositionally biased toward basic residues; that stretch reads GTARRKPAKKNKNQK. Threonine 67 carries the phosphothreonine modification. In terms of domain architecture, Tudor spans 89 to 149; that stretch reads QWKAGDKCSA…LSPTCEVANN (61 aa). The interval 95–205 is required for interaction with RPP20/POP7; it reads KCSAVWSEDG…VPGAGLGPGK (111 aa). The tract at residues 150 to 226 is disordered; that stretch reads TEQNTQENES…PPPPPPFLPC (77 aa). The segment covering 171–181 has biased composition (basic residues); the sequence is RSLRSKAHSKS. A Glycyl lysine isopeptide (Lys-Gly) (interchain with G-Cter in SUMO2) cross-link involves residue lysine 205. Residues 212–226 show a composition bias toward pro residues; it reads GPPPPPPPPPPFLPC. A P2 (binding site for SM B) region spans residues 235 to 262; it reads PPIIPPPPPISPDCLDDTDALGSMLISW. Positions 274-289 are required for interaction with SYNCRIP; that stretch reads GFRQNKKEGKKCSHTN.

It belongs to the SMN family. Homooligomer; may form higher order homooligomers in the dimer to octamer range. Part of the core SMN complex that contains SMN1, GEMIN2/SIP1, DDX20/GEMIN3, GEMIN4, GEMIN5, GEMIN6, GEMIN7, GEMIN8 and STRAP/UNRIP. Part of the SMN-Sm complex that contains SMN1, GEMIN2/SIP1, DDX20/GEMIN3, GEMIN4, GEMIN5, GEMIN6, GEMIN7, GEMIN8, STRAP/UNRIP and the Sm proteins SNRPB, SNRPD1, SNRPD2, SNRPD3, SNRPE, SNRPF and SNRPG. Component of an import snRNP complex composed of KPNB1, RNUT1, SMN1 and ZNF259. Interacts with DDX20, FBL, NOLA1, RNUT1 and with several spliceosomal snRNP core Sm proteins, including SNRPB, SNRPD1, SNRPD2, SNRPD3, SNRPE and ILF3. Interacts with GEMIN2; the interaction is direct. Interacts with GEMIN3; the interaction is direct. Interacts with GEMIN8; the interaction is direct. Interacts with SNRPB; the interaction is direct. Interacts (via Tudor domain) with SNRPD1 (via C-terminus); the interaction is direct. Interacts with SNRPD2; the interaction is direct. Interacts (via Tudor domain) with SNRPD3 (via C-terminus); the interaction is direct. Interacts with SNRPE; the interaction is direct. Interacts with OSTF1, LSM10, LSM11 and RPP20/POP7. Interacts (via C-terminal region) with ZPR1 (via C-terminal region). Interacts (via Tudor domain) with COIL. Interacts with SETX; recruits SETX to POLR2A. Interacts with POLR2A (via the C-terminal domain (CTD)). Interacts with PRMT5. Interacts with XRN2. Interacts (via C-terminus) with FMR1 (via C-terminus); the interaction is direct and occurs in a RNA-independent manner. Interacts with SYNCRIP. Interacts (via Tudor domain) with SF3B2 (methylated form). Interacts with WRAP53/TCAB1. Interacts (via Tudor domain) with ELAVL4 in an RNA-independent manner; the interaction is required for localization of ELAVL4 to RNA granules. Interacts with FRG1.

It is found in the nucleus. Its subcellular location is the gem. It localises to the cajal body. The protein resides in the cytoplasm. The protein localises to the cytoplasmic granule. It is found in the perikaryon. Its subcellular location is the cell projection. It localises to the neuron projection. The protein resides in the axon. The protein localises to the myofibril. It is found in the sarcomere. Its subcellular location is the z line. In terms of biological role, the SMN complex catalyzes the assembly of small nuclear ribonucleoproteins (snRNPs), the building blocks of the spliceosome, and thereby plays an important role in the splicing of cellular pre-mRNAs. Most spliceosomal snRNPs contain a common set of Sm proteins SNRPB, SNRPD1, SNRPD2, SNRPD3, SNRPE, SNRPF and SNRPG that assemble in a heptameric protein ring on the Sm site of the small nuclear RNA to form the core snRNP (Sm core). In the cytosol, the Sm proteins SNRPD1, SNRPD2, SNRPE, SNRPF and SNRPG are trapped in an inactive 6S pICln-Sm complex by the chaperone CLNS1A that controls the assembly of the core snRNP. To assemble core snRNPs, the SMN complex accepts the trapped 5Sm proteins from CLNS1A forming an intermediate. Binding of snRNA inside 5Sm ultimately triggers eviction of the SMN complex, thereby allowing binding of SNRPD3 and SNRPB to complete assembly of the core snRNP. Within the SMN complex, SMN1 acts as a structural backbone and together with GEMIN2 it gathers the Sm complex subunits. Ensures the correct splicing of U12 intron-containing genes that may be important for normal motor and proprioceptive neurons development. Also required for resolving RNA-DNA hybrids created by RNA polymerase II, that form R-loop in transcription terminal regions, an important step in proper transcription termination. May also play a role in the metabolism of small nucleolar ribonucleoprotein (snoRNPs). This chain is Survival motor neuron protein (Smn1), found in Rattus norvegicus (Rat).